We begin with the raw amino-acid sequence, 627 residues long: Neutral endopeptidase (627 aa).

The Peptidase M13 domain maps to 1–627 (MTRIQDDLFA…RAPENRLKIW (627 aa)). His-475 contacts Zn(2+). Residue Glu-476 is part of the active site. Zn(2+) contacts are provided by His-479 and Glu-535. Residue Asp-539 is the Proton donor of the active site.

This sequence belongs to the peptidase M13 family. As to quaternary structure, monomer. Zn(2+) serves as cofactor.

The protein resides in the cytoplasm. Endopeptidase with broad substrate specificity for several oligopeptides. In Lactococcus lactis subsp. cremoris (Streptococcus cremoris), this protein is Neutral endopeptidase (pepO).